The following is a 486-amino-acid chain: MGEDKKTARETVEEEPLSPCSRLFNSPDFNCAIIVTMGSKVKGDTPAIIHGLEHTLVNHPRFSSILEMNNGKKPRWVRTKVKVEEHVIVPDVDPDIENPDQYLEDYISKLTTIPMDLSKPLWEMHLLGVKTSNAESYAILKIHHSLGDGMSLMSLLLACTRKTSDPEALPTVAVHKKRFGPSCNSGFFNKIWWLFVGLWFILRLLFNTFVDILMFALTIFVLRDTETPLLAKPGSELIPKRFVHRIISFDDVKLVKNAMKMTVNDVLLGVTQAGLSRYLSRKYDQEATPKSKESMRRIRLRSAIMINLRPNAGIEALADMMAKKSKCRWGNLFGYILLPFSVGLETDPLEYVRQAKATIDRKKHSLEAVFSMAFFKLILKVLGLKASVVLVRKVIHSTTLSFSNVVGPKEEITFHGHPLNYISPCVFGHPHALTLHFQTYANKVIISVTADPTVIPDPHKMCDDLVESLKMIKAAVLERGLYEIEV.

The Cytoplasmic portion of the chain corresponds to methionine 1 to tryptophan 192. The active-site Proton acceptor is histidine 144. Residues tryptophan 193–leucine 213 form a helical membrane-spanning segment. The Extracellular portion of the chain corresponds to methionine 214–valine 486.

In the N-terminal section; belongs to the long-chain O-acyltransferase family. As to expression, mostly expressed in inflorescences and flowers, especially at the periphery of petal epidermal cells.

It localises to the cell membrane. Its subcellular location is the endoplasmic reticulum membrane. It catalyses the reaction an acyl-CoA + a 1,2-diacyl-sn-glycerol = a triacyl-sn-glycerol + CoA. The catalysed reaction is a long chain fatty alcohol + a fatty acyl-CoA = a wax ester + CoA. It participates in glycerolipid metabolism; triacylglycerol biosynthesis. Its pathway is lipid metabolism. Its function is as follows. Bifunctional wax ester synthase/diacylglycerol acyltransferase. Involved in cuticular wax biosynthesis. Required for petals development, probably by mediating the production of fatty acids at the plasma membrane in the petal epidermis acting as lubricants that makes petal elongation smooth in narrow space between the sepals and the anthers inside floral buds. The chain is Wax ester synthase/diacylglycerol acyltransferase 11 from Arabidopsis thaliana (Mouse-ear cress).